A 267-amino-acid polypeptide reads, in one-letter code: Coiled-coil domain-containing protein 90B, mitochondrial (267 aa).

The transit peptide at 1 to 47 (MKGSQLYRHLSLQGNRLHLHLFQGKKLQLHPSQGHKGTAHRTWKKGF) directs the protein to the mitochondrion. A coiled-coil region spans residues 142 to 175 (LEKSEFATLRAENEKMKIELEHVRQHLLNETNRI). Residues 244–266 (TVRYMAASVFTCLAIALGFYRLW) form a helical membrane-spanning segment.

The protein belongs to the CCDC90 family.

The protein localises to the mitochondrion membrane. The protein is Coiled-coil domain-containing protein 90B, mitochondrial (ccdc90b) of Xenopus tropicalis (Western clawed frog).